A 943-amino-acid polypeptide reads, in one-letter code: TBC1 domain family member 2B (943 aa).

The segment at 1–29 (MPGVEDPCDSQGTPPEEPSTSVAPGEAAK) is disordered. Over residues 10 to 22 (SQGTPPEEPSTSV) the composition is skewed to polar residues. Residues 32–129 (SPRLCGYLAK…WLQELQQKRW (98 aa)) form the PH domain. A coiled-coil region spans residues 315–514 (RMESDVLLKL…ARYSNLEAKM (200 aa)). In terms of domain architecture, Rab-GAP TBC spans 642–836 (GIPHEHRSRM…RIWDSLLYEG (195 aa)).

It localises to the early endosome. In terms of biological role, GTPase-activating protein that plays a role in the early steps of endocytosis. In Xenopus tropicalis (Western clawed frog), this protein is TBC1 domain family member 2B (tbc1d2b).